An 845-amino-acid polypeptide reads, in one-letter code: Dynein axonemal assembly factor 5 (845 aa).

HEAT repeat units follow at residues 47-84 (DVFDKLYLHLLKCYEDRFESVRSKAIQVVSAFLSSLPP), 138-175 (ECYPLVVKILIKSIKDDYPVVQREGCSAVVTLSRLADT), 180-217 (PFTESILLPLYTMLNHKHAQARISAIQAIARLSLHMDA), 260-297 (SFFERILPLVLCCLKDESPEVLNHIYPQWLKCGIQYFN), 332-369 (QRSLRLLQLITRETSDWKDNVRLHALKLLYQFVLHAEA), 523-561 (NFGQTLIEKMVKLLNTSVPKIHERWFHLALQDVINLDAA), 674-715 (SESV…MSVE), and 766-803 (AIVKRAMDLLLLYHESPEKDMRAAVAVTLKVLAKSHPE).

This sequence belongs to the DNAAF5 family. As to expression, expressed in testis.

It localises to the cytoplasm. Its subcellular location is the dynein axonemal particle. Its function is as follows. Cytoplasmic protein involved in the delivery of the dynein machinery to the motile cilium. It is required for the assembly of the axonemal dynein inner and outer arms, two structures attached to the peripheral outer doublet A microtubule of the axoneme, that play a crucial role in cilium motility. The chain is Dynein axonemal assembly factor 5 from Drosophila melanogaster (Fruit fly).